The sequence spans 86 residues: MKAFSVAVVLVIACMFILESTAVPFSEVRTEEVGSFDSPVGEHQQPGGESMHLPEPFRFKRQIHLSLCGLCCNCCHNIGCGFCCKF.

An N-terminal signal peptide occupies residues 1–22 (MKAFSVAVVLVIACMFILESTA). A propeptide spanning residues 23-59 (VPFSEVRTEEVGSFDSPVGEHQQPGGESMHLPEPFRF) is cleaved from the precursor. Cystine bridges form between Cys-68–Cys-84, Cys-71–Cys-74, Cys-72–Cys-80, and Cys-75–Cys-83.

This sequence belongs to the hepcidin family.

It localises to the secreted. Functionally, seems to act as a signaling molecule involved in the maintenance of iron homeostasis. Seems to be required in conjunction with HFE to regulate both intestinal iron absorption and iron storage in macrophages. May also have antimicrobial activity. This chain is Hepcidin-1 (hamp1), found in Salmo salar (Atlantic salmon).